We begin with the raw amino-acid sequence, 166 residues long: Apoptosis regulator M11L (166 aa).

The chain crosses the membrane as a helical span at residues Ser138–Leu160.

Interacts with host BAX; this interaction inhibits apoptosis activation. Interacts with host BAK1.

The protein localises to the host mitochondrion. The protein resides in the host membrane. Plays a role in the inhibition of mitochondria-mediated apoptosis by blocking the activation of mitochondria-tranlocalized BAX thereby maintaining pro-apoptotic BAX in an inactive conformation. Also inhibits apoptosis in a BAX-independent manner by interacting with and inhibiting host BAK1. The protein is Apoptosis regulator M11L (m011L) of Myxoma virus (strain Lausanne) (MYXV).